Consider the following 330-residue polypeptide: GTPase Obg (330 aa).

The region spanning 1–159 (MHFIDEVKIY…MWIHLRLKLL (159 aa)) is the Obg domain. An OBG-type G domain is found at 160–327 (SDVGLVGLPN…IVKLALEIIK (168 aa)). Residues 166-173 (GLPNAGKS), 191-195 (FTTLV), 212-215 (DIPG), 279-282 (NKCD), and 308-310 (STY) each bind GTP. 2 residues coordinate Mg(2+): serine 173 and threonine 193.

Belongs to the TRAFAC class OBG-HflX-like GTPase superfamily. OBG GTPase family. In terms of assembly, monomer. Mg(2+) serves as cofactor.

It is found in the cytoplasm. In terms of biological role, an essential GTPase which binds GTP, GDP and possibly (p)ppGpp with moderate affinity, with high nucleotide exchange rates and a fairly low GTP hydrolysis rate. Plays a role in control of the cell cycle, stress response, ribosome biogenesis and in those bacteria that undergo differentiation, in morphogenesis control. This is GTPase Obg from Rickettsia typhi (strain ATCC VR-144 / Wilmington).